The chain runs to 399 residues: Acetate kinase (399 aa).

Asparagine 7 provides a ligand contact to Mg(2+). Lysine 14 contacts ATP. Residue arginine 91 participates in substrate binding. Aspartate 148 functions as the Proton donor/acceptor in the catalytic mechanism. Residues 208-212 (HIGNG), 283-285 (DMR), and 331-335 (GVGEN) each bind ATP. Glutamate 385 lines the Mg(2+) pocket.

This sequence belongs to the acetokinase family. Homodimer. Mg(2+) is required as a cofactor. Requires Mn(2+) as cofactor.

The protein localises to the cytoplasm. The enzyme catalyses acetate + ATP = acetyl phosphate + ADP. Its pathway is metabolic intermediate biosynthesis; acetyl-CoA biosynthesis; acetyl-CoA from acetate: step 1/2. Functionally, catalyzes the formation of acetyl phosphate from acetate and ATP. Can also catalyze the reverse reaction. The protein is Acetate kinase of Bacteroides thetaiotaomicron (strain ATCC 29148 / DSM 2079 / JCM 5827 / CCUG 10774 / NCTC 10582 / VPI-5482 / E50).